Reading from the N-terminus, the 181-residue chain is Shikimate kinase 2 (181 aa).

Position 12–17 (12–17) interacts with ATP; that stretch reads GCGKTT. Residues Thr16 and Asp32 each contribute to the Mg(2+) site. Substrate is bound by residues Asp34, Arg58, and Gly79. An LID domain region spans residues 112–126; sequence EAEPEADLRPTLTGK. Arg120 contacts ATP. A substrate-binding site is contributed by Arg139.

It belongs to the shikimate kinase family. AroL subfamily. In terms of assembly, monomer. Mg(2+) is required as a cofactor.

It localises to the cytoplasm. It carries out the reaction shikimate + ATP = 3-phosphoshikimate + ADP + H(+). It participates in metabolic intermediate biosynthesis; chorismate biosynthesis; chorismate from D-erythrose 4-phosphate and phosphoenolpyruvate: step 5/7. Its function is as follows. Catalyzes the specific phosphorylation of the 3-hydroxyl group of shikimic acid using ATP as a cosubstrate. The protein is Shikimate kinase 2 of Salmonella heidelberg (strain SL476).